The following is a 360-amino-acid chain: Protein pelota homolog (360 aa).

This sequence belongs to the eukaryotic release factor 1 family. Pelota subfamily. Monomer. The cofactor is a divalent metal cation.

The protein resides in the cytoplasm. May function in recognizing stalled ribosomes, interact with stem-loop structures in stalled mRNA molecules, and effect endonucleolytic cleavage of the mRNA. May play a role in the release non-functional ribosomes and degradation of damaged mRNAs. Has endoribonuclease activity. The protein is Protein pelota homolog of Hyperthermus butylicus (strain DSM 5456 / JCM 9403 / PLM1-5).